A 482-amino-acid chain; its full sequence is ATP synthase subunit beta (482 aa).

Residue glycine 161–threonine 168 coordinates ATP.

This sequence belongs to the ATPase alpha/beta chains family. F-type ATPases have 2 components, CF(1) - the catalytic core - and CF(0) - the membrane proton channel. CF(1) has five subunits: alpha(3), beta(3), gamma(1), delta(1), epsilon(1). CF(0) has four main subunits: a(1), b(1), b'(1) and c(9-12).

It localises to the cellular thylakoid membrane. The catalysed reaction is ATP + H2O + 4 H(+)(in) = ADP + phosphate + 5 H(+)(out). In terms of biological role, produces ATP from ADP in the presence of a proton gradient across the membrane. The catalytic sites are hosted primarily by the beta subunits. The protein is ATP synthase subunit beta of Gloeothece citriformis (strain PCC 7424) (Cyanothece sp. (strain PCC 7424)).